Consider the following 78-residue polypeptide: Small ribosomal subunit protein uS17 (78 aa).

It belongs to the universal ribosomal protein uS17 family. Part of the 30S ribosomal subunit.

In terms of biological role, one of the primary rRNA binding proteins, it binds specifically to the 5'-end of 16S ribosomal RNA. The polypeptide is Small ribosomal subunit protein uS17 (Agrobacterium fabrum (strain C58 / ATCC 33970) (Agrobacterium tumefaciens (strain C58))).